The following is a 301-amino-acid chain: Phospholipase A1 (301 aa).

Cysteines 4 and 87 form a disulfide. Ser-137 serves as the catalytic Nucleophile. The active-site Charge relay system is Asp-165. 2 disulfides stabilise this stretch: Cys-176–Cys-181 and Cys-219–Cys-228. His-230 functions as the Charge relay system in the catalytic mechanism. Intrachain disulfides connect Cys-245–Cys-269, Cys-246–Cys-294, and Cys-262–Cys-267.

This sequence belongs to the AB hydrolase superfamily. Lipase family. In terms of tissue distribution, expressed by the venom gland.

Its subcellular location is the secreted. It carries out the reaction a 1,2-diacyl-sn-glycero-3-phosphocholine + H2O = a 2-acyl-sn-glycero-3-phosphocholine + a fatty acid + H(+). Catalyzes the hydrolysis of phosphatidylcholine with phospholipase A1 activity. May act as an allergen and induce hemolytic activity. This is Phospholipase A1 from Vespa crabro (European hornet).